The chain runs to 124 residues: Large ribosomal subunit protein bL19 (124 aa).

The protein belongs to the bacterial ribosomal protein bL19 family.

In terms of biological role, this protein is located at the 30S-50S ribosomal subunit interface and may play a role in the structure and function of the aminoacyl-tRNA binding site. The sequence is that of Large ribosomal subunit protein bL19 from Zymomonas mobilis subsp. mobilis (strain ATCC 31821 / ZM4 / CP4).